Reading from the N-terminus, the 549-residue chain is MPNSKKSKKGGDQQHVTIVPVEPVKGENVDTVAYSSRSRISGESGHLIADVQSPHAKKHRIIFDRDHNVFEFRLLDGSAKHIIVYRLDELLSTTCYPFKIKNGVPIIPTKPTTSDKTLYFNFVYKKDKQKWRLKQIPVIFYTTSERDYWHSLIDTTLRRVKNRPKNIIIFINPFGGNGKAQKIFKDNVDAFFWLTPGLRYKVVLTERANHARDYIVEMPPEQWSAIDGLVSVGGDGLFNELLSGALLRTQTDAGRNIDNPSSHLVTPHIRFGIIGAGSANSIVSTVHETNDHATSAVHIAIGSECNVDVCTVHQHQKLIRISANAISYGWLGDVLRDSEEYRCLGPIRYQWSALRTTIRHPIYRGMVQFSLSHKENVNPKDQLPPCLEPCPVCMKPQGNDKYDYHWHAEFTHVICCVIPTVTPFTPYGLAPFTGIGDGTLDLALVPRISRFHNMQFMRKVAMYGGKQLYELDPSLNCYRVTKWSYQPDADQEDPGVWNLDGEILEQPKDEPLHFKLHPQLISFFGRDAAMVKPTKRSFIKKRKSSIVYQ.

In terms of domain architecture, DAGKc spans 162–316 (NRPKNIIIFI…VDVCTVHQHQ (155 aa)). ATP is bound by residues 172-174 (NPF) and 205-209 (TERAN). 233 to 236 (GGDG) serves as a coordination point for substrate. Asp-235 serves as the catalytic Proton donor/acceptor. Residues Glu-240, 277–279 (GSA), Arg-342, Arg-348, and 500–502 (DGE) contribute to the ATP site.

It carries out the reaction an N-acylsphing-4-enine + ATP = an N-acylsphing-4-enine 1-phosphate + ADP + H(+). The enzyme catalyses an N-acyl-15-methylhexadecasphing-4-enine + ATP = an N-acyl-15-methylhexadecasphing-4-enine-1-phosphate + ADP + H(+). Its pathway is lipid metabolism; sphingolipid metabolism. In terms of biological role, catalyzes the phosphorylation of ceramide to form ceramide 1-phosphate. C.elegans contain specific sphingoid bases, which are unique or different in structure compared to the sphingoid bases found in other animals. Two examples of these distinctive compounds are: 15-methylhexadecasphinganine and 15-methylhexadecasphing-4-enine. This is Ceramide kinase 1 from Caenorhabditis elegans.